The chain runs to 312 residues: Malate dehydrogenase (312 aa).

Residues 7-13 and Asp34 each bind NAD(+); that span reads GAAGGIG. Positions 81 and 87 each coordinate substrate. NAD(+) contacts are provided by residues Asn94 and 117-119; that span reads ITN. 2 residues coordinate substrate: Asn119 and Arg153. The Proton acceptor role is filled by His177. Met227 contacts NAD(+).

The protein belongs to the LDH/MDH superfamily. MDH type 1 family. Homodimer.

It carries out the reaction (S)-malate + NAD(+) = oxaloacetate + NADH + H(+). Functionally, catalyzes the reversible oxidation of malate to oxaloacetate. This is Malate dehydrogenase from Edwardsiella ictaluri (strain 93-146).